The primary structure comprises 271 residues: DNA repair protein RecO (271 aa).

The protein belongs to the RecO family.

In terms of biological role, involved in DNA repair and RecF pathway recombination. This Rhodococcus erythropolis (strain PR4 / NBRC 100887) protein is DNA repair protein RecO.